The chain runs to 794 residues: MRGPRRFRLWTRANVLTVISILTSILSGAGCSPLSQLPSDNPAHVGVQDGVTTERVDRSKNHRNTTASSGAHRVTSGEPLGDRVTTRSTTAPDQVPGDASRNTTMAGTKCSLQVDLSTFACPADCQCNATSEGMVVSCVTPDTLREFPVIAREVARAVIKLELRGQSKLTSLKTELKFFTCLKHLTIENCGLNNIQGIAFKTLTSLETINLRHNHLTEFPQELLRTLNLRELWLEGNALTCSCTNLWLRSVDVAADRSEMTCSTRDGVSKMKMTQFKCEPCGIPDIRNMTLVFEPKNGMFLLRFVISGCPKPKIDLLRNHHHVLRSGSSQFKLTDFKSEFNGQVVTGTITILPHMETSQTTYVLTAVNSKGQANQTFHLYDQTTPASSIHIPLSNIPPRISSATTPRASPTEDFGPQTQVILPVVGVVILLISAVFIIYLCQRAKHRSHARQRCKKALLDKKFNEFQEGVPLTGLQLVDNPNYNLTKKKHVATTCPKTVRLQTILLMRVIGEGAFGRVFLGTCAHLIQKNEFAIVAVKTLKGSCSDSLKRDFEREAEMLATIEHANIVTFYGVCTESDQWMMIFEFMENGDLNKYLRMHGPDAAFLKDRDSMDSDEGQLTREQLMKIVLQIASAMEYLALQHFVHRDLATRNCLVGCDLVVKLGDFGMSRDVYTTDYYRVEGTAMLPVRWMPPESIIYRTFTTESDVWSFGVTLWEVFTYGKQPWFEYSNSEVIEHIKNSRTLKRPPRTCTDGVYRVMQGCWKPNPQDRLTMKDIAELLREEVSGDPVYIDIIA.

The first 33 residues, 1 to 33 (MRGPRRFRLWTRANVLTVISILTSILSGAGCSP), serve as a signal peptide directing secretion. At 34–419 (LSQLPSDNPA…PTEDFGPQTQ (386 aa)) the chain is on the extracellular side. The tract at residues 36–102 (QLPSDNPAHV…DQVPGDASRN (67 aa)) is disordered. N64, N102, and N128 each carry an N-linked (GlcNAc...) asparagine glycan. LRR repeat units follow at residues 181 to 202 (CLKH…AFKT) and 205 to 226 (SLET…LLRT). The LRRCT domain maps to 237-280 (NALTCSCTNLWLRSVDVAADRSEMTCSTRDGVSKMKMTQFKCEP). 2 N-linked (GlcNAc...) asparagine glycosylation sites follow: N288 and N374. The chain crosses the membrane as a helical span at residues 420 to 440 (VILPVVGVVILLISAVFIIYL). Residues 441–794 (CQRAKHRSHA…GDPVYIDIIA (354 aa)) lie on the Cytoplasmic side of the membrane. The Protein kinase domain maps to 504–775 (ILLMRVIGEG…PQDRLTMKDI (272 aa)). ATP contacts are provided by residues 510–518 (IGEGAFGRV) and K538. D647 acts as the Proton acceptor in catalysis. 4 positions are modified to phosphotyrosine; by autocatalysis: Y673, Y677, Y678, and Y789.

The protein belongs to the protein kinase superfamily. Tyr protein kinase family. Insulin receptor subfamily. Expression is confined to the central nervous system and its associated endocrine tissues.

The protein localises to the membrane. The catalysed reaction is L-tyrosyl-[protein] + ATP = O-phospho-L-tyrosyl-[protein] + ADP + H(+). Functionally, may bind an endogenous invertebrate neurotrophin. Binds human NT-3, but not NGF or BDNF. This Lymnaea stagnalis (Great pond snail) protein is Putative neurotrophin receptor LTRK 1.